Reading from the N-terminus, the 874-residue chain is Alanine--tRNA ligase (874 aa).

H562, H566, C663, and H667 together coordinate Zn(2+).

This sequence belongs to the class-II aminoacyl-tRNA synthetase family. Requires Zn(2+) as cofactor.

The protein localises to the cytoplasm. The catalysed reaction is tRNA(Ala) + L-alanine + ATP = L-alanyl-tRNA(Ala) + AMP + diphosphate. Its function is as follows. Catalyzes the attachment of alanine to tRNA(Ala) in a two-step reaction: alanine is first activated by ATP to form Ala-AMP and then transferred to the acceptor end of tRNA(Ala). Also edits incorrectly charged Ser-tRNA(Ala) and Gly-tRNA(Ala) via its editing domain. The sequence is that of Alanine--tRNA ligase from Bordetella bronchiseptica (strain ATCC BAA-588 / NCTC 13252 / RB50) (Alcaligenes bronchisepticus).